A 521-amino-acid polypeptide reads, in one-letter code: Glucose-1-phosphate adenylyltransferase large subunit 2, chloroplastic/amyloplastic (521 aa).

A chloroplast-targeting transit peptide spans 1 to 47 (MQFSSVLPLEGKACMSPVRRGSGGYGSERMRINCCSIRRNKALRRMC).

Belongs to the bacterial/plant glucose-1-phosphate adenylyltransferase family. In terms of assembly, heterotetramer. As to expression, abundant in the embryo and is also present in the endosperm.

It localises to the plastid. The protein resides in the chloroplast. It is found in the amyloplast. The catalysed reaction is alpha-D-glucose 1-phosphate + ATP + H(+) = ADP-alpha-D-glucose + diphosphate. It functions in the pathway glycan biosynthesis; starch biosynthesis. Activated by 3'phosphoglycerate, inhibited by orthophosphate. Allosteric regulation. Its function is as follows. This protein plays a role in synthesis of starch. It catalyzes the synthesis of the activated glycosyl donor, ADP-glucose from Glc-1-P and ATP. The protein is Glucose-1-phosphate adenylyltransferase large subunit 2, chloroplastic/amyloplastic (AGP2) of Zea mays (Maize).